We begin with the raw amino-acid sequence, 241 residues long: Aspartate/glutamate leucyltransferase (241 aa).

It belongs to the R-transferase family. Bpt subfamily.

Its subcellular location is the cytoplasm. It catalyses the reaction N-terminal L-glutamyl-[protein] + L-leucyl-tRNA(Leu) = N-terminal L-leucyl-L-glutamyl-[protein] + tRNA(Leu) + H(+). It carries out the reaction N-terminal L-aspartyl-[protein] + L-leucyl-tRNA(Leu) = N-terminal L-leucyl-L-aspartyl-[protein] + tRNA(Leu) + H(+). Functions in the N-end rule pathway of protein degradation where it conjugates Leu from its aminoacyl-tRNA to the N-termini of proteins containing an N-terminal aspartate or glutamate. The protein is Aspartate/glutamate leucyltransferase of Helicobacter hepaticus (strain ATCC 51449 / 3B1).